A 403-amino-acid polypeptide reads, in one-letter code: Glucose-signaling factor 2 (403 aa).

Residues 1-177 (MEIYIRLNAD…QEVQANYSSL (177 aa)) lie on the Lumenal side of the membrane. N-linked (GlcNAc...) asparagine glycans are attached at residues Asn-89 and Asn-173. Residues 178-198 (VAQWLFFVMHIFKVGIITLFL) form a helical; Signal-anchor for type II membrane protein membrane-spanning segment. The Cytoplasmic segment spans residues 199-403 (KLGIANPISF…IKKNDLKKSN (205 aa)). Residues 330–388 (ELENNLKKILEEYDGDIGKMNAEIRRFRRFGIYEPDEKLASLVKLRREIADEKEKASNN) are a coiled coil.

The protein localises to the endoplasmic reticulum membrane. May be involved in the secretion of hexose transporters from the endoplasmic reticulum. Involved in secretion of GAL2 and HXT1. The protein is Glucose-signaling factor 2 (GSF2) of Saccharomyces cerevisiae (strain ATCC 204508 / S288c) (Baker's yeast).